Reading from the N-terminus, the 151-residue chain is Small ribosomal subunit protein uS15y (151 aa).

This sequence belongs to the universal ribosomal protein uS15 family.

The protein is Small ribosomal subunit protein uS15y of Oryza sativa subsp. japonica (Rice).